A 179-amino-acid chain; its full sequence is MSTLRTEYLENVAPKLQEEFGYSNAMQIPRLSKVVLNMGLGEAIQNNKILEGAVDELTLISGQKPVVTKAKKSIAAFKLREGMPIGVTATLRRDRMYDFLNKLVNVTLPRVRDFRGISPKAFDGRGNYTLGIREQIIFPEINYDRIDKVKGLNITIVTTAKNDEEGRRLLTLLGMPFRK.

Belongs to the universal ribosomal protein uL5 family. Part of the 50S ribosomal subunit; part of the 5S rRNA/L5/L18/L25 subcomplex. Contacts the 5S rRNA and the P site tRNA. Forms a bridge to the 30S subunit in the 70S ribosome.

This is one of the proteins that bind and probably mediate the attachment of the 5S RNA into the large ribosomal subunit, where it forms part of the central protuberance. In the 70S ribosome it contacts protein S13 of the 30S subunit (bridge B1b), connecting the 2 subunits; this bridge is implicated in subunit movement. Contacts the P site tRNA; the 5S rRNA and some of its associated proteins might help stabilize positioning of ribosome-bound tRNAs. This chain is Large ribosomal subunit protein uL5, found in Desulfatibacillum aliphaticivorans.